A 333-amino-acid polypeptide reads, in one-letter code: GDP-mannose transporter GONST1 (333 aa).

9 helical membrane-spanning segments follow: residues 33 to 55 (ALLS…KFVL), 62 to 84 (AGIF…LSLM), 99 to 121 (VWFP…LKYI), 153 to 170 (VWAA…GGIT), 174 to 196 (FNAV…SLTL), 216 to 238 (SMVL…FFNE), 253 to 275 (FWMV…MWFL), 282 to 304 (TYSL…LFNV), and 308 to 325 (LQNS…VVFA).

The protein belongs to the nucleotide-sugar transporter family. GDP-Mannose:GMP antiporter (GMA) (TC 2.A.7.13) subfamily.

It localises to the golgi apparatus membrane. Involved in the import of GDP-mannose from the cytoplasm into the Golgi lumen. Required for the luminal synthesis of a variety of plant cell surface components. Is required for the correct mannosylation of the glycosylinositol phosphoceramides (GIPC). Can indifferently transport GDP-mannose, GDP-Glucose, GDP-Fucose or GDP-Galactose in vitro. The protein is GDP-mannose transporter GONST1 of Arabidopsis thaliana (Mouse-ear cress).